The chain runs to 377 residues: Geranylgeranyl transferase type-1 subunit beta (377 aa).

PFTB repeat units lie at residues 144–186 (KEAC…YMLN), 193–234 (MKKA…CLMG), 245–284 (LNRI…KLLK), and 291–333 (FEKN…SLME). Geranylgeranyl diphosphate contacts are provided by residues 219-221 (HGG) and 263-266 (RPNK). Asp-269 and Cys-271 together coordinate Zn(2+). 272-275 (YSFW) contributes to the geranylgeranyl diphosphate binding site. His-321 is a Zn(2+) binding site.

Belongs to the protein prenyltransferase subunit beta family. As to quaternary structure, heterodimer of FNTA and PGGT1B. PGGT1B mediates interaction with substrate peptides. The cofactor is Zn(2+). Mg(2+) is required as a cofactor.

It carries out the reaction geranylgeranyl diphosphate + L-cysteinyl-[protein] = S-geranylgeranyl-L-cysteinyl-[protein] + diphosphate. Its function is as follows. Catalyzes the transfer of a geranyl-geranyl moiety from geranyl-geranyl pyrophosphate to a cysteine at the fourth position from the C-terminus of proteins having the C-terminal sequence Cys-aliphatic-aliphatic-X. Known substrates include RAC1, RAC2, RAP1A and RAP1B. The protein is Geranylgeranyl transferase type-1 subunit beta (PGGT1B) of Homo sapiens (Human).